The primary structure comprises 389 residues: Succinate--CoA ligase [ADP-forming] subunit beta (389 aa).

The ATP-grasp domain occupies 9 to 236 (RDMFEAHGVP…KDAADPLEAK (228 aa)). ATP-binding positions include lysine 45, 52 to 54 (GRG), alanine 94, and glutamate 99. Mg(2+) contacts are provided by asparagine 191 and aspartate 205. Residues asparagine 256 and 318-320 (GIT) contribute to the substrate site.

The protein belongs to the succinate/malate CoA ligase beta subunit family. As to quaternary structure, heterotetramer of two alpha and two beta subunits. Mg(2+) serves as cofactor.

It carries out the reaction succinate + ATP + CoA = succinyl-CoA + ADP + phosphate. It catalyses the reaction GTP + succinate + CoA = succinyl-CoA + GDP + phosphate. The protein operates within carbohydrate metabolism; tricarboxylic acid cycle; succinate from succinyl-CoA (ligase route): step 1/1. Its function is as follows. Succinyl-CoA synthetase functions in the citric acid cycle (TCA), coupling the hydrolysis of succinyl-CoA to the synthesis of either ATP or GTP and thus represents the only step of substrate-level phosphorylation in the TCA. The beta subunit provides nucleotide specificity of the enzyme and binds the substrate succinate, while the binding sites for coenzyme A and phosphate are found in the alpha subunit. The protein is Succinate--CoA ligase [ADP-forming] subunit beta of Arthrobacter sp. (strain FB24).